The chain runs to 218 residues: Adenylate kinase (218 aa).

Gly10–Thr15 is an ATP binding site. The interval Ser30 to Val59 is NMP. AMP contacts are provided by residues Thr31, Arg36, Gln57 to Val59, Gly85 to Arg88, and Gln92. Residues Gly122 to Asp159 are LID. ATP contacts are provided by residues Arg123 and Thr132 to Tyr133. Arg156 and Arg167 together coordinate AMP. Gly203 contacts ATP.

It belongs to the adenylate kinase family. Monomer.

It localises to the cytoplasm. It catalyses the reaction AMP + ATP = 2 ADP. It participates in purine metabolism; AMP biosynthesis via salvage pathway; AMP from ADP: step 1/1. Catalyzes the reversible transfer of the terminal phosphate group between ATP and AMP. Plays an important role in cellular energy homeostasis and in adenine nucleotide metabolism. The protein is Adenylate kinase of Marinomonas sp. (strain MWYL1).